Here is a 490-residue protein sequence, read N- to C-terminus: Doublesex- and mab-3-related transcription factor A1 (490 aa).

Residues 1–13 (MERLPHGRRDRSG) show a composition bias toward basic and acidic residues. Residues 1–31 (MERLPHGRRDRSGGCRPHLAPGRAAAPASAA) form a disordered region. Positions 20–31 (APGRAAAPASAA) are enriched in low complexity. The DM DNA-binding region spans 86–133 (CARCRNHGVVSALKGHKRFCRWRDCACAKCTLIAERQRVMAAQVALRR). 2 disordered regions span residues 152 to 171 (GSSGSGAQASGGSGRTESPQ) and 207 to 289 (DRKQ…DLES). The span at 207 to 216 (DRKQEPKQRN) shows a compositional bias: basic and acidic residues. Composition is skewed to polar residues over residues 217 to 242 (CESCQSRQEEPVSNTHHHSLGSSKGN) and 269 to 289 (PTDQSGGEDSPRSFSSSDLES). Residues 314-349 (RDPLGILTRIFPGYKHSRLEGILQFCKGDVVQAIEQ) form the DMA domain.

Belongs to the DMRT family. As to expression, widely expressed, with highest levels in ovary, testis, epididymis, preputial gland, vomeronasal organ, liver, salivary glands and heart. Also expressed throughout the brain with highest levels in the olfactory bulbs and medulla. Detected at similar levels in gonads of both sexes.

The protein localises to the nucleus. In Mus musculus (Mouse), this protein is Doublesex- and mab-3-related transcription factor A1 (Dmrta1).